A 506-amino-acid polypeptide reads, in one-letter code: Putative transporter SVOPL (506 aa).

The next 10 membrane-spanning stretches (helical) occupy residues 57 to 77 (SIGF…ANIV), 104 to 124 (ALVS…CGYI), 133 to 153 (VVFG…FSTS), 190 to 210 (LLPL…VLGM), 220 to 240 (WMIR…MFIP), 297 to 317 (TSLL…GSVL), 362 to 382 (LISC…LNIV), 397 to 417 (FFFM…LLFL), 444 to 464 (IGMG…PFIA), and 472 to 492 (VILA…GVFF).

Belongs to the major facilitator superfamily.

It is found in the membrane. The chain is Putative transporter SVOPL (svopl) from Danio rerio (Zebrafish).